Reading from the N-terminus, the 138-residue chain is Large ribosomal subunit protein uL29 (138 aa).

The tract at residues M1 to N79 is large ribosomal subunit protein uL29. The segment at K80–K138 is unknown. Residues Q103–K138 are disordered.

Belongs to the universal ribosomal protein uL29 family.

The chain is Large ribosomal subunit protein uL29 from Mycoplasma capricolum subsp. capricolum (strain California kid / ATCC 27343 / NCTC 10154).